A 187-amino-acid chain; its full sequence is Ribosome-recycling factor (187 aa).

It belongs to the RRF family.

The protein resides in the cytoplasm. Responsible for the release of ribosomes from messenger RNA at the termination of protein biosynthesis. May increase the efficiency of translation by recycling ribosomes from one round of translation to another. The protein is Ribosome-recycling factor of Orientia tsutsugamushi (strain Boryong) (Rickettsia tsutsugamushi).